A 257-amino-acid polypeptide reads, in one-letter code: Sulfur carrier protein FdhD (257 aa).

Residue Cys-105 is the Cysteine persulfide intermediate of the active site.

This sequence belongs to the FdhD family.

It is found in the cytoplasm. Functionally, required for formate dehydrogenase (FDH) activity. Acts as a sulfur carrier protein that transfers sulfur from IscS to the molybdenum cofactor prior to its insertion into FDH. This chain is Sulfur carrier protein FdhD, found in Saccharolobus solfataricus (strain ATCC 35092 / DSM 1617 / JCM 11322 / P2) (Sulfolobus solfataricus).